Consider the following 154-residue polypeptide: Ribonuclease H (154 aa).

Residues 1 to 142 form the RNase H type-1 domain; the sequence is MQKQIEIFTD…CDELAKKGAE (142 aa). Mg(2+)-binding residues include aspartate 10, glutamate 48, aspartate 70, and aspartate 134.

It belongs to the RNase H family. In terms of assembly, monomer. Mg(2+) is required as a cofactor.

It is found in the cytoplasm. It catalyses the reaction Endonucleolytic cleavage to 5'-phosphomonoester.. In terms of biological role, endonuclease that specifically degrades the RNA of RNA-DNA hybrids. This Haemophilus influenzae (strain 86-028NP) protein is Ribonuclease H.